Consider the following 930-residue polypeptide: F-box only protein 11 (930 aa).

The interval 1-150 is disordered; the sequence is MNSVRAANRR…RVSGKSQDLS (150 aa). Residues 7–16 show a composition bias toward basic residues; sequence ANRRPRRVSR. Low complexity predominate over residues 17-27; it reads PRPVQQQQQQP. A compositionally biased stretch (pro residues) spans 28-73; it reads PQQPPPQPPQQQPPPQPPQQPPQQQPPPPPQQQPPPPPPPPPPPPQ. Residues 117–132 are compositionally biased toward polar residues; the sequence is PTKSSMEGASTSTTEN. The 47-residue stretch at 156 to 202 folds into the F-box domain; that stretch reads QYLQEKLPDEVVLKIFSYLLEQDLCRAACVCKRFSELANDPILWKRL. PbH1 repeat units follow at residues 398-420, 421-443, 444-466, 467-489, 490-512, 513-535, 536-558, 559-581, 582-604, 605-627, 628-650, 651-673, 674-696, 697-719, 720-742, 743-765, 766-788, 789-811, and 812-833; these read GACPTIKHCNISDCENVGLYITD, HAQGIYEDNEISNNALAGIWVKN, HGNPIIRRNHIHHGRDVGVFTFD, HGMGYFESCNIHRNRIAGFEVKA, YANPTVVRCEIHHGQTGGIYVHE, KGRGQFIENKIYANNFAGVWITS, NSDPTIRGNSIFNGNQGGVYIFG, DGRGLIEGNDIYGNALAGIQIRT, NSCPIVRHNKIHDGQHGGIYVHE, KGQGVIEENEVYSNTLAGVWVTT, GSTPVLRRNRIHSGKQVGVYFYD, NGHGVLEDNDIYNHMYSGVQIRT, GSNPKIRRNKIWGGQNGGILVYN, SGLGCIEDNEIFDNAMAGVWIKT, DSNPTLRRNKIHDGRDGGICIFN, GGRGLLEENDIFRNAQAGVLIST, NSHPVLRKNRIFDGFAAGIEITN, HATATLEGNQIFNNRFGGLFLAS, and GVNVTMKDNKIMNNQDAIEKAV. The UBR-type zinc-finger motif lies at 836 to 907; that stretch reads GQCLYKISSY…LSNPCTLAGE (72 aa).

Component of the SCF(FBXO11) complex consisting of CUL1, RBX1, SKP1 and FBXO11. Interacts with CIITA. At 9.5 dpc and 10.5 dpc, expression is restricted to developing heart tissue. By 11.5 dpc and 12.5 dpc, detected in liver and subsequently in muscle by 13.5 dpc. At 14.5 dpc, still detected in heart, liver and muscle and also in the developing secondary palate including the nasal, medial and oral epithelia of the palatal shelves. At 15.5 dpc and 16.5 dpc, expressed in lung, kidney, heart, liver, muscle and adrenal gland. At this time, fusion of the palate shelves has occurred, with expression confined to the nasal and oral epithelia. At 17.5 dpc, expression in the lung is confined to bronchial epithelial cells and is evident in bone marrow, skin, tissue macrophages, osteoblasts, kidney, liver and spleen. At 18.5 dpc, expressed in bone marrow, liver, kidney and muscle but decreases in heart and lung. At this time, first detected in the middle ear epithelium. At the newborn stage, expression is strong in the middle ear where it is confined to mucin-secreting cells, as well as persisting in bone marrow, kidney and liver. Middle ear expression persists in postnatal head tissue at 4 and 13 days after birth and has declined by 21 days after birth. In the adult, expression is seen in alveolar macrophages of the lung, glomeruli and collecting tubules of the kidney, midbrain, heart and muscle.

It localises to the nucleus. Its subcellular location is the chromosome. Its pathway is protein modification; protein ubiquitination. Its function is as follows. Substrate recognition component of a SCF (SKP1-CUL1-F-box protein) E3 ubiquitin-protein ligase complex which mediates the ubiquitination and subsequent proteasomal degradation of target proteins, such as DTL/CDT2, BCL6, SNAI1 and PRDM1/BLIMP1. The SCF(FBXO11) complex mediates ubiquitination and degradation of BCL6, thereby playing a role in the germinal center B-cells terminal differentiation toward memory B-cells and plasma cells. The SCF(FBXO11) complex also mediates ubiquitination and degradation of DTL, an important step for the regulation of TGF-beta signaling, cell migration and the timing of the cell-cycle progression and exit. The SCF(FBXO11) complex also catalyzes ubiquitination and degradation of GSK3B-phosphorylated SNAI1. Binds to and neddylates phosphorylated p53/TP53, inhibiting its transcriptional activity. Plays a role in the regulatiom of erythropoiesis but not myelopoiesis or megakaryopoiesis. Mechanistically, activates erythroid genes by mediating the degradation of BAHD1, a heterochromatin-associated protein that recruits corepressors to H3K27me3 marks. Participates in macrophage cell death and inflammation in response to bacterial toxins by regulating the expression of complement 5a receptor 1/C5AR1 and IL-1beta. Acts as a critical regulator to determine the level of MHC-II by mediating the recognition of degron at the P/S/T domain of CIITA leading to its ubiquitination and subsequent degradation via the proteasome. Participates in the antiviral repsonse by initiating the activation of TBK1-IRF3-IFN-I axis. Mediates the 'Lys-63'-linked ubiquitination of TRAF3 to strengthen the interaction between TRAF3 and TBK1. This Mus musculus (Mouse) protein is F-box only protein 11.